The chain runs to 329 residues: Methionyl-tRNA formyltransferase (329 aa).

Position 112 to 115 (112 to 115 (SILP)) interacts with (6S)-5,6,7,8-tetrahydrofolate.

This sequence belongs to the Fmt family.

The enzyme catalyses L-methionyl-tRNA(fMet) + (6R)-10-formyltetrahydrofolate = N-formyl-L-methionyl-tRNA(fMet) + (6S)-5,6,7,8-tetrahydrofolate + H(+). Attaches a formyl group to the free amino group of methionyl-tRNA(fMet). The formyl group appears to play a dual role in the initiator identity of N-formylmethionyl-tRNA by promoting its recognition by IF2 and preventing the misappropriation of this tRNA by the elongation apparatus. This Shewanella sediminis (strain HAW-EB3) protein is Methionyl-tRNA formyltransferase.